The sequence spans 397 residues: Putative F-box protein At1g26510 (397 aa).

Positions 1–23 (MRTRSKKTKTVNNNNDLQKSEEK) are disordered. The region spanning 24–71 (QKFDQLPLDLEIEMFRRLPLKSVARFLTLSKSCATTIRSPSFITSFPS) is the F-box domain.

The polypeptide is Putative F-box protein At1g26510 (Arabidopsis thaliana (Mouse-ear cress)).